Consider the following 847-residue polypeptide: DNA mismatch repair protein MutS (847 aa).

Position 603 to 610 (603 to 610) interacts with ATP; that stretch reads GPNMSGKS.

The protein belongs to the DNA mismatch repair MutS family.

In terms of biological role, this protein is involved in the repair of mismatches in DNA. It is possible that it carries out the mismatch recognition step. This protein has a weak ATPase activity. This chain is DNA mismatch repair protein MutS, found in Streptococcus suis (strain 98HAH33).